Here is a 251-residue protein sequence, read N- to C-terminus: Imidazole glycerol phosphate synthase subunit HisF (251 aa).

Catalysis depends on residues D12 and D131.

This sequence belongs to the HisA/HisF family. As to quaternary structure, heterodimer of HisH and HisF.

It is found in the cytoplasm. The catalysed reaction is 5-[(5-phospho-1-deoxy-D-ribulos-1-ylimino)methylamino]-1-(5-phospho-beta-D-ribosyl)imidazole-4-carboxamide + L-glutamine = D-erythro-1-(imidazol-4-yl)glycerol 3-phosphate + 5-amino-1-(5-phospho-beta-D-ribosyl)imidazole-4-carboxamide + L-glutamate + H(+). It participates in amino-acid biosynthesis; L-histidine biosynthesis; L-histidine from 5-phospho-alpha-D-ribose 1-diphosphate: step 5/9. Its function is as follows. IGPS catalyzes the conversion of PRFAR and glutamine to IGP, AICAR and glutamate. The HisF subunit catalyzes the cyclization activity that produces IGP and AICAR from PRFAR using the ammonia provided by the HisH subunit. In Streptomyces griseus subsp. griseus (strain JCM 4626 / CBS 651.72 / NBRC 13350 / KCC S-0626 / ISP 5235), this protein is Imidazole glycerol phosphate synthase subunit HisF.